The following is a 432-amino-acid chain: Transcobalamin-2 (432 aa).

Residues methionine 1–alanine 18 form the signal peptide. 3 disulfides stabilise this stretch: cysteine 21/cysteine 270, cysteine 116/cysteine 312, and cysteine 165/cysteine 208. Asparagine 94 carries N-linked (GlcNAc...) asparagine glycosylation. Cob(II)alamin is bound by residues glutamine 104, threonine 152 to glutamine 156, histidine 193, histidine 193 to aspartate 197, asparagine 245, serine 248, glutamine 294, and tryptophan 400 to valine 402.

The protein belongs to the eukaryotic cobalamin transport proteins family. Interacts with CD320 (via LDL-receptor class A domains). Expressed in mammary gland, kidney, lymphatic nodes and liver.

The protein localises to the secreted. Primary vitamin B12-binding and transport protein. Delivers cobalamin to cells. The sequence is that of Transcobalamin-2 (TCN2) from Bos taurus (Bovine).